We begin with the raw amino-acid sequence, 524 residues long: Na(+)/H(+) antiporter NhaG (524 aa).

11 consecutive transmembrane segments (helical) span residues 6–26, 33–53, 59–79, 98–118, 126–146, 169–189, 193–213, 242–262, 283–303, 312–332, and 374–394; these read LHHI…ITAI, PYPI…IPLF, FITE…PALL, VLAL…SSMW, AAFV…LSIF, LAVV…DLGI, GLGL…GGVL, FLLA…AALI, FWDV…GLEI, WGLA…AVYI, and DILV…GLTI.

Belongs to the monovalent cation:proton antiporter 1 (CPA1) transporter (TC 2.A.36) family.

It localises to the cell membrane. Its function is as follows. Na(+)/H(+) antiporter that extrudes sodium in exchange for external protons. Can also transport lithium. The polypeptide is Na(+)/H(+) antiporter NhaG (nhaG) (Bacillus atrophaeus).